The primary structure comprises 69 residues: Light-harvesting polypeptide B-800/860 alpha chain (69 aa).

Topologically, residues 1–14 (MTNGKIWLVVKPTV) are cytoplasmic. A helical membrane pass occupies residues 15-35 (GLPIGMLFAALLAVLIHGLLF). A bacteriochlorophyll is bound at residue histidine 31. Over 36 to 69 (VDGRLKSWWSEFPVAKPAVVSVQAAPAPVAAEVK) the chain is Periplasmic.

Belongs to the antenna complex alpha subunit family. As to quaternary structure, the core complex is formed by different alpha and beta chains, binding bacteriochlorophyll molecules, and arranged most probably in tetrameric structures disposed around the reaction center. The non-pigmented gamma chains may constitute additional components.

The protein resides in the cell inner membrane. Functionally, antenna complexes are light-harvesting systems, which transfer the excitation energy to the reaction centers. The sequence is that of Light-harvesting polypeptide B-800/860 alpha chain from Rhodocyclus tenuis (Rhodospirillum tenue).